Consider the following 88-residue polypeptide: Small ribosomal subunit protein bS16c (88 aa).

This sequence belongs to the bacterial ribosomal protein bS16 family.

The protein resides in the plastid. The protein localises to the chloroplast. In Sinapis alba (White mustard), this protein is Small ribosomal subunit protein bS16c.